We begin with the raw amino-acid sequence, 480 residues long: MLAVRNMKFGIFLLWWGWVLAAESTVHWPGREVHEPSKKGSRPQRQRRGAHDDAHKQGSPILKRSSDITKSPLTKSEQLLRIDDHDFSMRPGFGGPAIPVGVDVQVESLDSISEVDMDFTMTLYLRHYWKDERLSFPSTNNLSMTFDGRLVKKIWVPDMFFVHSKRSFIHDTTTDNVMLRVQPDGKVLYSLRVTVTAMCNMDFSRFPLDTQTCSLEIESYAYTEDDLMLYWKKGNDSLKTDERISLSQFLIQEFHTTTKLAFYSSTGWYNRLYINFTLRRHIFFFLLQTYFPATLMVMLSWVSFWIDRRAVPARVPLGITTVLTMSTIITGVNASMPRVSYIKAVDIYLWVSFVFVFLSVLEYAAVNYLTTVQERKERKLREKISCTCGLPQPRGVMLDSSYSDGEVNDLGGYMPENGEKPDRMMVQLTLASERGSPQRKSQRGSYVSMRINTHAIDKYSRIIFPAAYILFNLIYWSIFS.

An N-terminal signal peptide occupies residues 1 to 21 (MLAVRNMKFGIFLLWWGWVLA). The Extracellular segment spans residues 22 to 281 (AESTVHWPGR…LYINFTLRRH (260 aa)). The disordered stretch occupies residues 31–67 (REVHEPSKKGSRPQRQRRGAHDDAHKQGSPILKRSSD). Residues 39-48 (KGSRPQRQRR) show a composition bias toward basic residues. A 4-aminobutanoate-binding site is contributed by Arg126. N-linked (GlcNAc...) asparagine glycosylation is present at Asn141. 4-aminobutanoate is bound at residue Ser190. Cysteines 199 and 213 form a disulfide. 4-aminobutanoate is bound at residue Glu218. Residues Asn235 and Asn275 are each glycosylated (N-linked (GlcNAc...) asparagine). The helical transmembrane segment at 282–302 (IFFFLLQTYFPATLMVMLSWV) threads the bilayer. Residues 303-314 (SFWIDRRAVPAR) are Cytoplasmic-facing. Residues 315 to 335 (VPLGITTVLTMSTIITGVNAS) traverse the membrane as a helical segment. Residues 336–346 (MPRVSYIKAVD) lie on the Extracellular side of the membrane. The chain crosses the membrane as a helical span at residues 347 to 367 (IYLWVSFVFVFLSVLEYAAVN). Residues 368-458 (YLTTVQERKE…MRINTHAIDK (91 aa)) lie on the Cytoplasmic side of the membrane. Residues 459–479 (YSRIIFPAAYILFNLIYWSIF) traverse the membrane as a helical segment. Residue Ser480 is a topological domain, extracellular.

The protein belongs to the ligand-gated ion channel (TC 1.A.9) family. Gamma-aminobutyric acid receptor (TC 1.A.9.5) subfamily. GABRR1 sub-subfamily. Three rho subunits (rho-1/GBRR1, rho-2/GBRR2 and rho-3/GBRR3) coassemble either to form functional homopentamers or heteropentamers. Rho-1/GBRR1 subunits can also associate with alpha-1/GBRA1 subunits to form a functional GABAAR. Interacts with SQSTM1.

The protein resides in the postsynaptic cell membrane. It localises to the cell membrane. It catalyses the reaction chloride(in) = chloride(out). Its activity is regulated as follows. Inhibited by TPMPA, a rho-specific antagonist. Inhibited by picrotoxin, when forming a homopentamer. In contrast with other GABAARs, rho-1 GABAAR is not inhibited by bicuculline, when forming a homopentamer. Down-regulated by external protons when forming a homopentamer. In terms of biological role, rho subunit of the pentameric ligand-gated chloride channels responsible for mediating the effects of gamma-aminobutyric acid (GABA), the major inhibitory neurotransmitter in the brain. Rho-containing GABA-gated chloride channels are a subclass of GABA(A) receptors (GABAARs) entirely composed of rho subunits, where GABA molecules bind at the rho intersubunit interfaces. When activated by GABA, rho-GABAARs selectively allow the flow of chloride anions across the cell membrane down their electrochemical gradient. Rho-1 subunits are primarily expressed in retina where rho-1-containing GABAARs may play a role in retinal neurotransmission. Rho-1 GABAARs are also involved in neuronal tonic (extrasynaptic) and phasic (synaptic) transmission in the Purkinje neurons of the cerebellum. Rho-1 GABAARs may also contribute to the regulation of glial development in the cerebellum by controlling extrasynaptic transmission. The sequence is that of Gamma-aminobutyric acid receptor subunit rho-1 from Rattus norvegicus (Rat).